A 361-amino-acid chain; its full sequence is Chorismate synthase (361 aa).

R48 and R54 together coordinate NADP(+). FMN-binding positions include 125–127, 238–239, G278, 293–297, and R319; these read RSS, NA, and KPTSS.

This sequence belongs to the chorismate synthase family. As to quaternary structure, homotetramer. It depends on FMNH2 as a cofactor.

It catalyses the reaction 5-O-(1-carboxyvinyl)-3-phosphoshikimate = chorismate + phosphate. Its pathway is metabolic intermediate biosynthesis; chorismate biosynthesis; chorismate from D-erythrose 4-phosphate and phosphoenolpyruvate: step 7/7. Its function is as follows. Catalyzes the anti-1,4-elimination of the C-3 phosphate and the C-6 proR hydrogen from 5-enolpyruvylshikimate-3-phosphate (EPSP) to yield chorismate, which is the branch point compound that serves as the starting substrate for the three terminal pathways of aromatic amino acid biosynthesis. This reaction introduces a second double bond into the aromatic ring system. This Yersinia pseudotuberculosis serotype IB (strain PB1/+) protein is Chorismate synthase.